A 78-amino-acid polypeptide reads, in one-letter code: NAD(P)H-quinone oxidoreductase subunit O (78 aa).

The protein belongs to the complex I NdhO subunit family. In terms of assembly, NDH-1 can be composed of about 15 different subunits; different subcomplexes with different compositions have been identified which probably have different functions.

It localises to the cell inner membrane. The catalysed reaction is a plastoquinone + NADH + (n+1) H(+)(in) = a plastoquinol + NAD(+) + n H(+)(out). The enzyme catalyses a plastoquinone + NADPH + (n+1) H(+)(in) = a plastoquinol + NADP(+) + n H(+)(out). Its function is as follows. NDH-1 shuttles electrons from an unknown electron donor, via FMN and iron-sulfur (Fe-S) centers, to quinones in the respiratory and/or the photosynthetic chain. The immediate electron acceptor for the enzyme in this species is believed to be plastoquinone. Couples the redox reaction to proton translocation, and thus conserves the redox energy in a proton gradient. Cyanobacterial NDH-1 also plays a role in inorganic carbon-concentration. The chain is NAD(P)H-quinone oxidoreductase subunit O from Gloeobacter violaceus (strain ATCC 29082 / PCC 7421).